A 660-amino-acid polypeptide reads, in one-letter code: Acetyl-coenzyme A synthetase (660 aa).

CoA is bound by residues Arg-197–Lys-200 and Thr-317. ATP-binding positions include Gly-397 to Pro-399, Asp-421 to Thr-426, Asp-512, and Arg-528. Ser-536 serves as a coordination point for CoA. ATP is bound at residue Arg-539. Mg(2+) contacts are provided by Val-550, His-552, and Val-555. Lys-625 carries the post-translational modification N6-acetyllysine.

This sequence belongs to the ATP-dependent AMP-binding enzyme family. Mg(2+) is required as a cofactor. Acetylated. Deacetylation by the SIR2-homolog deacetylase activates the enzyme.

It carries out the reaction acetate + ATP + CoA = acetyl-CoA + AMP + diphosphate. Catalyzes the conversion of acetate into acetyl-CoA (AcCoA), an essential intermediate at the junction of anabolic and catabolic pathways. AcsA undergoes a two-step reaction. In the first half reaction, AcsA combines acetate with ATP to form acetyl-adenylate (AcAMP) intermediate. In the second half reaction, it can then transfer the acetyl group from AcAMP to the sulfhydryl group of CoA, forming the product AcCoA. The polypeptide is Acetyl-coenzyme A synthetase (Burkholderia thailandensis (strain ATCC 700388 / DSM 13276 / CCUG 48851 / CIP 106301 / E264)).